Here is a 926-residue protein sequence, read N- to C-terminus: Periplasmic nitrate reductase (926 aa).

The tat-type signal signal peptide spans 1–30 (MNRRDFIKSAAASAACASAGIAIPANLSAA). The 4Fe-4S Mo/W bis-MGD-type domain occupies 37 to 93 (WRWDKAACRFCGTGCGIMVATKEGKIVAVKGDPEAPVNRGLNCIKGYFNAKIMYGED). Cys-44, Cys-47, Cys-51, and Cys-79 together coordinate [4Fe-4S] cluster. Mo-bis(molybdopterin guanine dinucleotide)-binding positions include Lys-81, Gln-149, Asn-174, Cys-178, 211 to 218 (WGANMAEM), Met-419, Gln-423, Asn-529, 554 to 555 (SD), Lys-577, Asp-604, and 816 to 825 (TGRVLEHWHS). Substrate is bound at residue Trp-892. Mo-bis(molybdopterin guanine dinucleotide)-binding residues include Asn-900 and Lys-917.

This sequence belongs to the prokaryotic molybdopterin-containing oxidoreductase family. NasA/NapA/NarB subfamily. In terms of assembly, component of the periplasmic nitrate reductase NapAB complex composed of NapA and NapB. [4Fe-4S] cluster serves as cofactor. The cofactor is Mo-bis(molybdopterin guanine dinucleotide). Post-translationally, predicted to be exported by the Tat system. The position of the signal peptide cleavage has not been experimentally proven.

It is found in the periplasm. It catalyses the reaction 2 Fe(II)-[cytochrome] + nitrate + 2 H(+) = 2 Fe(III)-[cytochrome] + nitrite + H2O. Its function is as follows. Catalytic subunit of the periplasmic nitrate reductase complex NapAB. Receives electrons from NapB and catalyzes the reduction of nitrate to nitrite. This is Periplasmic nitrate reductase from Campylobacter curvus (strain 525.92).